We begin with the raw amino-acid sequence, 323 residues long: Dihydrodiol dehydrogenase 3 (323 aa).

Residues 20–24 (GFGTF) and aspartate 50 contribute to the NADP(+) site. Tyrosine 55 (proton donor) is an active-site residue. Histidine 117 contributes to the substrate binding site. NADP(+) is bound by residues 166–167 (SN), glutamine 190, 216–221 (YGALGS), and 270–280 (KSYNKKRIKEN).

Belongs to the aldo/keto reductase family.

It localises to the cytoplasm. This is Dihydrodiol dehydrogenase 3 from Bos taurus (Bovine).